The following is a 482-amino-acid chain: uncharacterized protein (482 aa).

Residues 231–459 form the AB hydrolase-1 domain; sequence FEGNAGFYEI…FDACNHYLID (229 aa).

This is an uncharacterized protein from Caenorhabditis elegans.